A 113-amino-acid polypeptide reads, in one-letter code: Cell cycle protein GpsB (113 aa).

Residues 36 to 68 (LDMVIKDYSTFTQEIEALQAENIRLVQELDNAP) adopt a coiled-coil conformation.

It belongs to the GpsB family. Forms polymers through the coiled coil domains. Interacts with PBP1, MreC and EzrA.

It localises to the cytoplasm. Its function is as follows. Divisome component that associates with the complex late in its assembly, after the Z-ring is formed, and is dependent on DivIC and PBP2B for its recruitment to the divisome. Together with EzrA, is a key component of the system that regulates PBP1 localization during cell cycle progression. Its main role could be the removal of PBP1 from the cell pole after pole maturation is completed. Also contributes to the recruitment of PBP1 to the division complex. Not essential for septum formation. This is Cell cycle protein GpsB from Listeria monocytogenes serotype 4b (strain CLIP80459).